We begin with the raw amino-acid sequence, 129 residues long: DNA base-flipping protein (129 aa).

The protein belongs to the MGMT family. ATL subfamily. In terms of assembly, interacts with HelD and UvrA.

Involved in DNA damage recognition. Binds DNA containing O(6)-methylguanine and larger O(6)-alkylguanine adducts, and to double-stranded DNA that contains an AP (apurinic/apyrimidinic) site. Binds to the damaged base and flips the base out of the DNA duplex into an extrahelical conformation, which allows processing by repair proteins. Works in partnership with the nucleotide excision repair (NER) pathway to enhance the repair of the O(6)-alkylguanine adducts larger than the methyl adduct. Also prevents methyl-directed mismatch repair (MMR)-mediated attack of the O(6)-alkylguanine:T mispairs for the larger alkyl groups. The chain is DNA base-flipping protein from Escherichia coli (strain K12).